A 300-amino-acid polypeptide reads, in one-letter code: tRNA dimethylallyltransferase (300 aa).

11-18 lines the ATP pocket; sequence GPTAVGKS. A substrate-binding site is contributed by 13–18; it reads TAVGKS. The interaction with substrate tRNA stretch occupies residues 35–38; the sequence is DSIQ.

The protein belongs to the IPP transferase family. In terms of assembly, monomer. It depends on Mg(2+) as a cofactor.

The catalysed reaction is adenosine(37) in tRNA + dimethylallyl diphosphate = N(6)-dimethylallyladenosine(37) in tRNA + diphosphate. In terms of biological role, catalyzes the transfer of a dimethylallyl group onto the adenine at position 37 in tRNAs that read codons beginning with uridine, leading to the formation of N6-(dimethylallyl)adenosine (i(6)A). In Borrelia turicatae (strain 91E135), this protein is tRNA dimethylallyltransferase.